Consider the following 86-residue polypeptide: Small ribosomal subunit protein bS20 (86 aa).

The protein belongs to the bacterial ribosomal protein bS20 family.

Functionally, binds directly to 16S ribosomal RNA. In Pelagibacter ubique (strain HTCC1062), this protein is Small ribosomal subunit protein bS20.